A 564-amino-acid polypeptide reads, in one-letter code: Mitochondrial distribution and morphology protein 34 (564 aa).

The SMP-LTD domain occupies M1–E208. Disordered regions lie at residues E208–N240, S336–T397, Q404–D423, R434–Q517, and I532–H564. Residues S209 to P219 show a composition bias toward polar residues. Over residues S351–R365 the composition is skewed to basic residues. A compositionally biased stretch (basic and acidic residues) spans V366–D376. The segment covering S380–E390 has biased composition (low complexity). 2 stretches are compositionally biased toward polar residues: residues G438–S462 and P477–I503.

It belongs to the MDM34 family. As to quaternary structure, component of the ER-mitochondria encounter structure (ERMES) or MDM complex, composed of mmm1, mdm10, mdm12 and mdm34.

The protein localises to the mitochondrion outer membrane. Functionally, component of the ERMES/MDM complex, which serves as a molecular tether to connect the endoplasmic reticulum (ER) and mitochondria. Components of this complex are involved in the control of mitochondrial shape and protein biogenesis, and function in nonvesicular lipid trafficking between the ER and mitochondria. Mdm34 is required for the interaction of the ER-resident membrane protein mmm1 and the outer mitochondrial membrane-resident beta-barrel protein mdm10. This chain is Mitochondrial distribution and morphology protein 34, found in Talaromyces stipitatus (strain ATCC 10500 / CBS 375.48 / QM 6759 / NRRL 1006) (Penicillium stipitatum).